A 193-amino-acid polypeptide reads, in one-letter code: 7-methyl-GTP pyrophosphatase (193 aa).

Asp70 functions as the Proton acceptor in the catalytic mechanism.

Belongs to the Maf family. YceF subfamily. Requires a divalent metal cation as cofactor.

Its subcellular location is the cytoplasm. The catalysed reaction is N(7)-methyl-GTP + H2O = N(7)-methyl-GMP + diphosphate + H(+). Nucleoside triphosphate pyrophosphatase that hydrolyzes 7-methyl-GTP (m(7)GTP). May have a dual role in cell division arrest and in preventing the incorporation of modified nucleotides into cellular nucleic acids. The chain is 7-methyl-GTP pyrophosphatase from Vibrio cholerae serotype O1 (strain ATCC 39315 / El Tor Inaba N16961).